Reading from the N-terminus, the 240-residue chain is B-cell receptor-associated protein 29 (240 aa).

Residues 1 to 6 (MTLQWT) are Lumenal-facing. Residues 7-27 (AVATFLYAEIGLILIFCLPFI) traverse the membrane as a helical segment. The Cytoplasmic segment spans residues 28-43 (PPQRWQKIFSFSVWGK). Residues 44–64 (IASFWNKAFLTIIILLIVLFL) form a helical membrane-spanning segment. Residues 65–103 (DAVREVRKYSSTHTIEKSSASRPAAYEHTQMKLFRSQRN) lie on the Lumenal side of the membrane. Residues 104–124 (LYISGFSLFFWLVLRRLVTLI) form a helical membrane-spanning segment. Topologically, residues 125 to 240 (TQLAKELSHK…DRAGKDKKCL (116 aa)) are cytoplasmic. Positions 166–233 (GKEEEHILEA…REHSELQDRA (68 aa)) form a coiled coil. Positions 237–240 (KKCL) match the Di-lysine motif motif.

This sequence belongs to the BCAP29/BCAP31 family. In terms of assembly, homodimer and heterodimer with BCAP31. Binds CASP8 as a complex containing BCAP31, BCAP29, BCL2 and/or BCL2L1. Interacts with VAMP3, VAMP1 and membrane IgD immunoglobulins. May interact with ACTG1 and non-muscle myosin II.

It localises to the endoplasmic reticulum membrane. Its function is as follows. May play a role in anterograde transport of membrane proteins from the endoplasmic reticulum to the Golgi. May be involved in CASP8-mediated apoptosis. The chain is B-cell receptor-associated protein 29 (BCAP29) from Bos taurus (Bovine).